A 925-amino-acid polypeptide reads, in one-letter code: Bifunctional imidazolonepropionase/histidine ammonia-lyase (925 aa).

The segment at 1–414 (MTKNSSTVFT…IKPHVRMEPF (414 aa)) is imidazolonepropionase. Residues His73 and His75 each coordinate Fe(3+). The Zn(2+) site is built by His73 and His75. Residues Arg82, Tyr145, and His178 each contribute to the 4-imidazolone-5-propanoate site. Tyr145 serves as a coordination point for N-formimidoyl-L-glutamate. Fe(3+) is bound at residue His243. Zn(2+) is bound at residue His243. Gln246 is a binding site for 4-imidazolone-5-propanoate. Asp318 provides a ligand contact to Fe(3+). Asp318 provides a ligand contact to Zn(2+). N-formimidoyl-L-glutamate is bound by residues Asn320 and Gly322. Thr323 is a binding site for 4-imidazolone-5-propanoate. The tract at residues 415–925 (MTIILKPGSV…SAGILPDLEA (511 aa)) is histidine ammonia-lyase. The 5-imidazolinone (Ala-Gly) cross-link spans 556-558 (ASG). At Ser557 the chain carries 2,3-didehydroalanine (Ser).

The protein in the N-terminal section; belongs to the metallo-dependent hydrolases superfamily. HutI family. This sequence in the C-terminal section; belongs to the PAL/histidase family. It depends on Zn(2+) as a cofactor. Fe(3+) is required as a cofactor. Post-translationally, contains an active site 4-methylidene-imidazol-5-one (MIO), which is formed autocatalytically by cyclization and dehydration of residues Ala-Ser-Gly.

Its subcellular location is the cytoplasm. It carries out the reaction 4-imidazolone-5-propanoate + H2O = N-formimidoyl-L-glutamate. It catalyses the reaction L-histidine = trans-urocanate + NH4(+). It participates in amino-acid degradation; L-histidine degradation into L-glutamate; N-formimidoyl-L-glutamate from L-histidine: step 1/3. Its pathway is amino-acid degradation; L-histidine degradation into L-glutamate; N-formimidoyl-L-glutamate from L-histidine: step 3/3. Catalyzes the hydrolytic cleavage of the carbon-nitrogen bond in imidazolone-5-propanoate to yield N-formimidoyl-L-glutamate. It is the third step in the universal histidine degradation pathway. The sequence is that of Bifunctional imidazolonepropionase/histidine ammonia-lyase (hutIH) from Brucella melitensis biotype 1 (strain ATCC 23456 / CCUG 17765 / NCTC 10094 / 16M).